We begin with the raw amino-acid sequence, 403 residues long: 4-hydroxy-3-methylbut-2-enyl diphosphate reductase (403 aa).

Cys-66 contributes to the [4Fe-4S] cluster binding site. His-96 serves as a coordination point for (2E)-4-hydroxy-3-methylbut-2-enyl diphosphate. His-96 contacts dimethylallyl diphosphate. His-96 is a binding site for isopentenyl diphosphate. Cys-157 lines the [4Fe-4S] cluster pocket. His-185 serves as a coordination point for (2E)-4-hydroxy-3-methylbut-2-enyl diphosphate. His-185 serves as a coordination point for dimethylallyl diphosphate. Residue His-185 coordinates isopentenyl diphosphate. Glu-187 acts as the Proton donor in catalysis. Residue Thr-250 coordinates (2E)-4-hydroxy-3-methylbut-2-enyl diphosphate. Cys-288 contributes to the [4Fe-4S] cluster binding site. 4 residues coordinate (2E)-4-hydroxy-3-methylbut-2-enyl diphosphate: Ser-317, Ser-318, Asn-319, and Ser-379. Ser-317, Ser-318, Asn-319, and Ser-379 together coordinate dimethylallyl diphosphate. Isopentenyl diphosphate-binding residues include Ser-317, Ser-318, Asn-319, and Ser-379.

Belongs to the IspH family. [4Fe-4S] cluster is required as a cofactor.

The catalysed reaction is isopentenyl diphosphate + 2 oxidized [2Fe-2S]-[ferredoxin] + H2O = (2E)-4-hydroxy-3-methylbut-2-enyl diphosphate + 2 reduced [2Fe-2S]-[ferredoxin] + 2 H(+). It carries out the reaction dimethylallyl diphosphate + 2 oxidized [2Fe-2S]-[ferredoxin] + H2O = (2E)-4-hydroxy-3-methylbut-2-enyl diphosphate + 2 reduced [2Fe-2S]-[ferredoxin] + 2 H(+). The protein operates within isoprenoid biosynthesis; dimethylallyl diphosphate biosynthesis; dimethylallyl diphosphate from (2E)-4-hydroxy-3-methylbutenyl diphosphate: step 1/1. Its pathway is isoprenoid biosynthesis; isopentenyl diphosphate biosynthesis via DXP pathway; isopentenyl diphosphate from 1-deoxy-D-xylulose 5-phosphate: step 6/6. Functionally, catalyzes the conversion of 1-hydroxy-2-methyl-2-(E)-butenyl 4-diphosphate (HMBPP) into a mixture of isopentenyl diphosphate (IPP) and dimethylallyl diphosphate (DMAPP). Acts in the terminal step of the DOXP/MEP pathway for isoprenoid precursor biosynthesis. This is 4-hydroxy-3-methylbut-2-enyl diphosphate reductase from Rippkaea orientalis (strain PCC 8801 / RF-1) (Cyanothece sp. (strain PCC 8801)).